The primary structure comprises 169 residues: Crossover junction endodeoxyribonuclease RuvC (169 aa).

Residues Asp-11, Glu-71, and Asp-143 contribute to the active site. Mg(2+) is bound by residues Asp-11, Glu-71, and Asp-143.

The protein belongs to the RuvC family. As to quaternary structure, homodimer which binds Holliday junction (HJ) DNA. The HJ becomes 2-fold symmetrical on binding to RuvC with unstacked arms; it has a different conformation from HJ DNA in complex with RuvA. In the full resolvosome a probable DNA-RuvA(4)-RuvB(12)-RuvC(2) complex forms which resolves the HJ. Mg(2+) serves as cofactor.

It is found in the cytoplasm. The enzyme catalyses Endonucleolytic cleavage at a junction such as a reciprocal single-stranded crossover between two homologous DNA duplexes (Holliday junction).. In terms of biological role, the RuvA-RuvB-RuvC complex processes Holliday junction (HJ) DNA during genetic recombination and DNA repair. Endonuclease that resolves HJ intermediates. Cleaves cruciform DNA by making single-stranded nicks across the HJ at symmetrical positions within the homologous arms, yielding a 5'-phosphate and a 3'-hydroxyl group; requires a central core of homology in the junction. The consensus cleavage sequence is 5'-(A/T)TT(C/G)-3'. Cleavage occurs on the 3'-side of the TT dinucleotide at the point of strand exchange. HJ branch migration catalyzed by RuvA-RuvB allows RuvC to scan DNA until it finds its consensus sequence, where it cleaves and resolves the cruciform DNA. The chain is Crossover junction endodeoxyribonuclease RuvC from Rhizobium johnstonii (strain DSM 114642 / LMG 32736 / 3841) (Rhizobium leguminosarum bv. viciae).